We begin with the raw amino-acid sequence, 491 residues long: UDP-N-acetylmuramate--L-alanine ligase (491 aa).

126 to 132 (GTHGKTT) contacts ATP.

This sequence belongs to the MurCDEF family.

It is found in the cytoplasm. It catalyses the reaction UDP-N-acetyl-alpha-D-muramate + L-alanine + ATP = UDP-N-acetyl-alpha-D-muramoyl-L-alanine + ADP + phosphate + H(+). Its pathway is cell wall biogenesis; peptidoglycan biosynthesis. Its function is as follows. Cell wall formation. The polypeptide is UDP-N-acetylmuramate--L-alanine ligase (Salmonella agona (strain SL483)).